The primary structure comprises 113 residues: Nucleoid-associated protein THA_1374 (113 aa).

The protein belongs to the YbaB/EbfC family. In terms of assembly, homodimer.

It is found in the cytoplasm. It localises to the nucleoid. Its function is as follows. Binds to DNA and alters its conformation. May be involved in regulation of gene expression, nucleoid organization and DNA protection. The protein is Nucleoid-associated protein THA_1374 of Thermosipho africanus (strain TCF52B).